A 109-amino-acid polypeptide reads, in one-letter code: Non-structural protein NS-S (109 aa).

It belongs to the orthobunyavirus NS-S protein family.

Inhibits host transcriptional machinery, by producing modifications to the phosphorylation state of the C-terminal domain (CTD) of RNA polymerase II. Inhibits phosphorylation at serine 2 in the heptapeptide repeat (YSPTSPS) of the CTD of RNA polymerase II, suggesting that the elongation step of transcription and/or 3'-end processing is prevented. Inhibition of host transcription machinery leads to shut off of host cell protein synthesis and inhibition of the host innate immune response. NSs also seems to be involved in the nuclear relocalization of host PABP1. This chain is Non-structural protein NS-S (N), found in Culex.